The chain runs to 251 residues: CDP-diacylglycerol pyrophosphatase (251 aa).

A helical transmembrane segment spans residues 4–24 (AGLLFLVMIVIAVVAAGIGYW).

This sequence belongs to the Cdh family.

It localises to the cell inner membrane. The enzyme catalyses a CDP-1,2-diacyl-sn-glycerol + H2O = a 1,2-diacyl-sn-glycero-3-phosphate + CMP + 2 H(+). Its pathway is phospholipid metabolism; CDP-diacylglycerol degradation; phosphatidate from CDP-diacylglycerol: step 1/1. The protein is CDP-diacylglycerol pyrophosphatase of Escherichia coli (strain SE11).